We begin with the raw amino-acid sequence, 248 residues long: MIEYRIEEAVAKYREFYEFKPVRESAGIEDVKSAIEHTNLKPFATPDDIKKLCLEARENRFHGVCVNPCYVKLAREELEGTDVKVVTVVGFPLGANETRTKAHEAIFAVESGADEIDMVINVGMLKAKEWEYVYEDIRSVVESVKGKVVKVIIETCYLDTEEKIAACVISKLAGAHFVKTSTGFGTGGATAEDVHLMKWIVGDEMGVKASGGIRTFEDAVKMIMYGADRIGTSSGVKIVQGGEERYGG.

Asp-117 serves as the catalytic Proton donor/acceptor. Catalysis depends on Lys-179, which acts as the Schiff-base intermediate with acetaldehyde. Lys-208 functions as the Proton donor/acceptor in the catalytic mechanism.

This sequence belongs to the DeoC/FbaB aldolase family. DeoC type 1 subfamily.

The protein resides in the cytoplasm. The enzyme catalyses 2-deoxy-D-ribose 5-phosphate = D-glyceraldehyde 3-phosphate + acetaldehyde. It participates in carbohydrate degradation; 2-deoxy-D-ribose 1-phosphate degradation; D-glyceraldehyde 3-phosphate and acetaldehyde from 2-deoxy-alpha-D-ribose 1-phosphate: step 2/2. In terms of biological role, catalyzes a reversible aldol reaction between acetaldehyde and D-glyceraldehyde 3-phosphate to generate 2-deoxy-D-ribose 5-phosphate. In Thermotoga maritima (strain ATCC 43589 / DSM 3109 / JCM 10099 / NBRC 100826 / MSB8), this protein is Deoxyribose-phosphate aldolase.